Reading from the N-terminus, the 462-residue chain is Glycine--tRNA ligase (462 aa).

Substrate-binding residues include arginine 100 and glutamate 175. Residues arginine 207–glutamate 209, phenylalanine 217–phenylalanine 222, glutamate 291–leucine 292, and glycine 335–arginine 338 contribute to the ATP site. A substrate-binding site is contributed by phenylalanine 222–glutamate 226. Residue glutamate 331–glycine 335 participates in substrate binding.

This sequence belongs to the class-II aminoacyl-tRNA synthetase family. Homodimer.

The protein resides in the cytoplasm. The catalysed reaction is tRNA(Gly) + glycine + ATP = glycyl-tRNA(Gly) + AMP + diphosphate. Its function is as follows. Catalyzes the attachment of glycine to tRNA(Gly). This is Glycine--tRNA ligase from Clostridium acetobutylicum (strain ATCC 824 / DSM 792 / JCM 1419 / IAM 19013 / LMG 5710 / NBRC 13948 / NRRL B-527 / VKM B-1787 / 2291 / W).